A 152-amino-acid chain; its full sequence is SsrA-binding protein (152 aa).

The protein belongs to the SmpB family.

Its subcellular location is the cytoplasm. Required for rescue of stalled ribosomes mediated by trans-translation. Binds to transfer-messenger RNA (tmRNA), required for stable association of tmRNA with ribosomes. tmRNA and SmpB together mimic tRNA shape, replacing the anticodon stem-loop with SmpB. tmRNA is encoded by the ssrA gene; the 2 termini fold to resemble tRNA(Ala) and it encodes a 'tag peptide', a short internal open reading frame. During trans-translation Ala-aminoacylated tmRNA acts like a tRNA, entering the A-site of stalled ribosomes, displacing the stalled mRNA. The ribosome then switches to translate the ORF on the tmRNA; the nascent peptide is terminated with the 'tag peptide' encoded by the tmRNA and targeted for degradation. The ribosome is freed to recommence translation, which seems to be the essential function of trans-translation. The sequence is that of SsrA-binding protein from Rickettsia bellii (strain RML369-C).